The following is a 542-amino-acid chain: DM7 family protein CG15333 (542 aa).

It belongs to the DM7 family.

This chain is DM7 family protein CG15333, found in Drosophila melanogaster (Fruit fly).